A 255-amino-acid chain; its full sequence is Tabinhibitin 7 (255 aa).

An N-terminal signal peptide occupies residues 1 to 23 (MTSILVSSFLLATLVLQYATIDA). The short motif at 32–34 (RGD) is the Cell attachment site element. Positions 67 to 211 (LSKINDVRDH…KARALLTCNF (145 aa)) constitute an SCP domain.

This sequence belongs to the CRISP family. Expressed in salivary glands.

It is found in the secreted. Inhibits platelet aggregation induced by all agonists tested (ADP, arachidonic acid, the thromboxane A2 analog U46619, thrombin, and snake venom snaclecs (TMVA that activates platelet through GPIB, and stejnulxin that specifically acts through GPVI (GP6))). May act by competing with fibrinogen for binding to glycoprotein IIb/IIIa (ITGA2B/ITGB3). The chain is Tabinhibitin 7 from Tabanus yao (Horsefly).